Here is a 398-residue protein sequence, read N- to C-terminus: 1-deoxy-D-xylulose 5-phosphate reductoisomerase (398 aa).

Residues Thr-14, Gly-15, Ser-16, Ile-17, Gln-42, and Asn-128 each contribute to the NADPH site. Residue Lys-129 participates in 1-deoxy-D-xylulose 5-phosphate binding. Glu-130 is a binding site for NADPH. Residue Asp-154 coordinates Mn(2+). 4 residues coordinate 1-deoxy-D-xylulose 5-phosphate: Ser-155, Glu-156, Ser-185, and His-208. Residue Glu-156 coordinates Mn(2+). Gly-214 serves as a coordination point for NADPH. The 1-deoxy-D-xylulose 5-phosphate site is built by Ser-221, Asn-226, Lys-227, and Glu-230. A Mn(2+)-binding site is contributed by Glu-230.

Belongs to the DXR family. It depends on Mg(2+) as a cofactor. Mn(2+) serves as cofactor.

The catalysed reaction is 2-C-methyl-D-erythritol 4-phosphate + NADP(+) = 1-deoxy-D-xylulose 5-phosphate + NADPH + H(+). It participates in isoprenoid biosynthesis; isopentenyl diphosphate biosynthesis via DXP pathway; isopentenyl diphosphate from 1-deoxy-D-xylulose 5-phosphate: step 1/6. Catalyzes the NADPH-dependent rearrangement and reduction of 1-deoxy-D-xylulose-5-phosphate (DXP) to 2-C-methyl-D-erythritol 4-phosphate (MEP). The chain is 1-deoxy-D-xylulose 5-phosphate reductoisomerase from Dechloromonas aromatica (strain RCB).